A 147-amino-acid polypeptide reads, in one-letter code: Mitochondrial import receptor subunit TOM20 homolog (147 aa).

The Mitochondrial intermembrane segment spans residues 1-3 (MVV). Residues 4-26 (VGKTSAIAAGVCGALFLGYCIYF) form a helical membrane-spanning segment. Over 27 to 147 (DRKRRSDPNF…AQNLAEDDVE (121 aa)) the chain is Cytoplasmic.

This sequence belongs to the Tom20 family. Forms part of the preprotein translocase complex of the outer mitochondrial membrane (TOM complex). Interacts with tom22.

It is found in the mitochondrion outer membrane. Functionally, central component of the receptor complex responsible for the recognition and translocation of cytosolically synthesized mitochondrial preproteins. Together with tom22 functions as the transit peptide receptor at the surface of the mitochondrion outer membrane and facilitates the movement of preproteins into the tom40 translocation pore. This Xenopus tropicalis (Western clawed frog) protein is Mitochondrial import receptor subunit TOM20 homolog (tomm20).